We begin with the raw amino-acid sequence, 188 residues long: dCTP deaminase (188 aa).

Residues 111–116, 135–137, Gln156, Tyr170, and Gln180 each bind dCTP; these read KSTYAR and TLE. Catalysis depends on Glu137, which acts as the Proton donor/acceptor.

It belongs to the dCTP deaminase family. In terms of assembly, homotrimer.

It catalyses the reaction dCTP + H2O + H(+) = dUTP + NH4(+). The protein operates within pyrimidine metabolism; dUMP biosynthesis; dUMP from dCTP (dUTP route): step 1/2. Functionally, catalyzes the deamination of dCTP to dUTP. The polypeptide is dCTP deaminase (Francisella philomiragia subsp. philomiragia (strain ATCC 25017 / CCUG 19701 / FSC 153 / O#319-036)).